The sequence spans 339 residues: 3-isopropylmalate dehydrogenase (339 aa).

Substrate is bound by residues Arg87, Arg97, Arg124, and Asp214. Mg(2+) contacts are provided by Asp214, Asp238, and Asp242. Residue 274 to 286 (GSAPDIAGQGIAD) coordinates NAD(+).

This sequence belongs to the isocitrate and isopropylmalate dehydrogenases family. LeuB type 2 subfamily. Homodimer. Mg(2+) serves as cofactor. Mn(2+) is required as a cofactor.

The protein resides in the cytoplasm. The enzyme catalyses (2R,3S)-3-isopropylmalate + NAD(+) = 4-methyl-2-oxopentanoate + CO2 + NADH. It participates in amino-acid biosynthesis; L-leucine biosynthesis; L-leucine from 3-methyl-2-oxobutanoate: step 3/4. Catalyzes the oxidation of 3-carboxy-2-hydroxy-4-methylpentanoate (3-isopropylmalate) to 3-carboxy-4-methyl-2-oxopentanoate. The product decarboxylates to 4-methyl-2 oxopentanoate. The sequence is that of 3-isopropylmalate dehydrogenase from Mycobacterium ulcerans (strain Agy99).